Consider the following 1407-residue polypeptide: DNA-directed RNA polymerase subunit beta' (1407 aa).

Residues cysteine 70, cysteine 72, cysteine 85, and cysteine 88 each contribute to the Zn(2+) site. 3 residues coordinate Mg(2+): aspartate 460, aspartate 462, and aspartate 464. The Zn(2+) site is built by cysteine 814, cysteine 888, cysteine 895, and cysteine 898.

This sequence belongs to the RNA polymerase beta' chain family. The RNAP catalytic core consists of 2 alpha, 1 beta, 1 beta' and 1 omega subunit. When a sigma factor is associated with the core the holoenzyme is formed, which can initiate transcription. The cofactor is Mg(2+). Zn(2+) serves as cofactor.

It catalyses the reaction RNA(n) + a ribonucleoside 5'-triphosphate = RNA(n+1) + diphosphate. Functionally, DNA-dependent RNA polymerase catalyzes the transcription of DNA into RNA using the four ribonucleoside triphosphates as substrates. The polypeptide is DNA-directed RNA polymerase subunit beta' (Buchnera aphidicola subsp. Acyrthosiphon pisum (strain APS) (Acyrthosiphon pisum symbiotic bacterium)).